The sequence spans 89 residues: Small ribosomal subunit protein uS15 (89 aa).

Positions 1 to 23 (MTLNTQEKQKLINTHQNHGTDTG) are disordered.

The protein belongs to the universal ribosomal protein uS15 family. In terms of assembly, part of the 30S ribosomal subunit. Forms a bridge to the 50S subunit in the 70S ribosome, contacting the 23S rRNA.

Functionally, one of the primary rRNA binding proteins, it binds directly to 16S rRNA where it helps nucleate assembly of the platform of the 30S subunit by binding and bridging several RNA helices of the 16S rRNA. Its function is as follows. Forms an intersubunit bridge (bridge B4) with the 23S rRNA of the 50S subunit in the ribosome. In Prochlorococcus marinus (strain MIT 9211), this protein is Small ribosomal subunit protein uS15.